The primary structure comprises 354 residues: GTPase Obg (354 aa).

Residues 1 to 159 form the Obg domain; sequence MKFLDQCKIY…RWIWLRLKLI (159 aa). The OBG-type G domain maps to 160 to 328; the sequence is ADVGLVGLPN…LLRAAYKQVR (169 aa). Residues 166-173, 191-195, 213-216, 280-283, and 309-311 contribute to the GTP site; these read GLPNAGKS, FTTLT, DIPG, NKID, and SGV. Residues Ser-173 and Thr-193 each contribute to the Mg(2+) site. Residues 335–345 show a composition bias toward acidic residues; it reads EEEIDDDEDHV. The segment at 335 to 354 is disordered; sequence EEEIDDDEDHVDETPGGWTP.

Belongs to the TRAFAC class OBG-HflX-like GTPase superfamily. OBG GTPase family. In terms of assembly, monomer. Requires Mg(2+) as cofactor.

The protein localises to the cytoplasm. In terms of biological role, an essential GTPase which binds GTP, GDP and possibly (p)ppGpp with moderate affinity, with high nucleotide exchange rates and a fairly low GTP hydrolysis rate. Plays a role in control of the cell cycle, stress response, ribosome biogenesis and in those bacteria that undergo differentiation, in morphogenesis control. The polypeptide is GTPase Obg (Caulobacter vibrioides (strain ATCC 19089 / CIP 103742 / CB 15) (Caulobacter crescentus)).